Here is a 731-residue protein sequence, read N- to C-terminus: Actin filament-associated protein 1 (731 aa).

At Met1 the chain carries N-acetylmethionine. Residues 46–90 are disordered; it reads VKDHAQKAETNNLPAPPQMPLPEIPQPWLPPDSGPPPLPTSSLPE. Positions 59–84 are enriched in pro residues; that stretch reads PAPPQMPLPEIPQPWLPPDSGPPPLP. The SH3-binding signature appears at 70 to 73; the sequence is PQPW. An SH2-binding 1 motif is present at residues 93 to 96; sequence YEEA. The interval 118–138 is disordered; the sequence is GSSYESYDEEEEDGKGKKTQH. A PH 1 domain is found at 152-248; sequence DAKICAFLLR…WLKVIKEAYS (97 aa). The segment at 252–318 is disordered; the sequence is GPVDPECSPP…SKSEAKGTVS (67 aa). The span at 271–284 shows a compositional bias: basic and acidic residues; it reads AELEKKLSSERPSS. Phosphoserine is present on residues Ser283 and Ser284. The 95-residue stretch at 348–442 folds into the PH 2 domain; the sequence is DVPTCGYLNV…WIGILLAETG (95 aa). The SH2-binding 2 motif lies at 452–457; the sequence is YDYIDV. The segment at 511 to 550 is disordered; that stretch reads SLKNKKPPASSNGLPVKGRAPSSQQKKVESAGGVKRTASN. Ser549 bears the Phosphoserine mark. Residues 558 to 649 are a coiled coil; it reads KNRVEADAKR…VKESLKKALA (92 aa). Positions 595–638 are interaction with F-actin; it reads DLRAAIEVNAGRKTQVALEDKLKRLEEECKQREAERVSLELELT. Positions 657–731 are disordered; it reads AIEPKSGTSS…AREWELKNGT (75 aa). Phosphoserine is present on residues Ser665, Ser666, and Ser669. Thr676 is modified (phosphothreonine). A compositionally biased stretch (polar residues) spans 678–687; that stretch reads ENSPISSCDT. Phosphoserine occurs at positions 680 and 688. A compositionally biased stretch (basic and acidic residues) spans 721–731; it reads KAREWELKNGT.

In terms of assembly, monomer and homomultimer. Interacts via its C-terminus with F-actin; probably involving AFAP1 multimers. Interacts with activated SRC SH3-SH2 domains. Interacts via its PH 1 domain with PRKCA, PRKCB and PRKCI. Phosphorylated on tyrosine residues. In terms of tissue distribution, widely expressed with highest levels in brain.

It localises to the cytoplasm. The protein localises to the cytoskeleton. It is found in the stress fiber. In terms of biological role, can cross-link actin filaments into both network and bundle structures. May modulate changes in actin filament integrity and induce lamellipodia formation. May function as an adapter molecule that links other proteins, such as SRC and PKC to the actin cytoskeleton. The polypeptide is Actin filament-associated protein 1 (Afap1) (Rattus norvegicus (Rat)).